The sequence spans 76 residues: Translational regulator CsrA (76 aa).

Belongs to the CsrA/RsmA family. As to quaternary structure, homodimer; the beta-strands of each monomer intercalate to form a hydrophobic core, while the alpha-helices form wings that extend away from the core.

It localises to the cytoplasm. Its function is as follows. A translational regulator that binds mRNA to regulate translation initiation and/or mRNA stability. Usually binds in the 5'-UTR at or near the Shine-Dalgarno sequence preventing ribosome-binding, thus repressing translation. Its main target seems to be the major flagellin gene, while its function is anatagonized by FliW. This chain is Translational regulator CsrA, found in Helicobacter pylori (strain J99 / ATCC 700824) (Campylobacter pylori J99).